Consider the following 689-residue polypeptide: Putative ATP-dependent helicase IRC3 (689 aa).

Residues 46–211 (NSIRQGTKRI…SMVMDKIVYH (166 aa)) form the Helicase ATP-binding domain. 59 to 66 (LATGGGKT) is a binding site for ATP. Positions 158–161 (DEAH) match the DEAH box motif. The 174-residue stretch at 265–438 (ILKTYLHKKQ…KIDERLRALF (174 aa)) folds into the Helicase C-terminal domain.

The protein belongs to the helicase family. IRC3 subfamily.

Its subcellular location is the mitochondrion. The sequence is that of Putative ATP-dependent helicase IRC3 (IRC3) from Saccharomyces cerevisiae (strain ATCC 204508 / S288c) (Baker's yeast).